The sequence spans 659 residues: mRNA export factor ICP27 homolog (659 aa).

Zn(2+)-binding residues include Cys-130, His-266, Cys-268, and Cys-273. The CHC2-type zinc finger occupies 130–273; the sequence is CMMSNGERPP…CEHACNDNAC (144 aa). Residues 317–659 are disordered; the sequence is GSFDDSRSAT…GEDGESDMTL (343 aa). A compositionally biased stretch (low complexity) spans 324–336; sequence SATSGDGSSCSSA. The span at 354–365 shows a compositional bias: polar residues; the sequence is SDQTDTSNNGTV. The span at 387–397 shows a compositional bias: basic and acidic residues; it reads SPLDRPNDYHY. Over residues 413-427 the composition is skewed to low complexity; that stretch reads GSGSSSTEAVSTASA. The segment covering 483 to 499 has biased composition (basic and acidic residues); the sequence is SPERRSSEERSSSDQRR. The span at 503-513 shows a compositional bias: polar residues; that stretch reads LSRSASATSGG. A compositionally biased stretch (low complexity) spans 553–575; sequence SRSNTPPSSPSKPDSAPAASASP. Residues 598 to 610 show a composition bias toward basic and acidic residues; it reads ESVRVSERFETGD. Acidic residues-rich tracts occupy residues 617-628 and 646-659; these read ETEDESDDEDDQ and SETDGEDGESDMTL.

It belongs to the HHV-1 ICP27 protein family.

The protein resides in the virion tegument. The protein localises to the virion. It localises to the host nucleus. It is found in the host cytoplasm. Functionally, immediate early (EI) protein that plays many roles during productive infection including regulation of viral gene expression and nuclear export of intronless viral RNAs. In Elephantid herpesvirus 1 (isolate Asian elephant/Berlin/Kiba/1998) (EIHV-1), this protein is mRNA export factor ICP27 homolog.